A 376-amino-acid polypeptide reads, in one-letter code: D-alanine--D-alanine ligase (376 aa).

In terms of domain architecture, ATP-grasp spans 153 to 366; that stretch reads KLLLAGQGLP…YPELVHRLIQ (214 aa). 185-240 serves as a coordination point for ATP; that stretch reads VEALGYPVFVKPARAGSSIGITRVTSREGLAAAVAEAVSHDPKVVVEAALVGREIE. D317, E333, and N335 together coordinate Mg(2+).

The protein belongs to the D-alanine--D-alanine ligase family. Mg(2+) is required as a cofactor. It depends on Mn(2+) as a cofactor.

It localises to the cytoplasm. The enzyme catalyses 2 D-alanine + ATP = D-alanyl-D-alanine + ADP + phosphate + H(+). Its pathway is cell wall biogenesis; peptidoglycan biosynthesis. Functionally, cell wall formation. This is D-alanine--D-alanine ligase from Kineococcus radiotolerans (strain ATCC BAA-149 / DSM 14245 / SRS30216).